A 198-amino-acid chain; its full sequence is Nucleoid occlusion factor SlmA (198 aa).

The region spanning 9–70 (RNRREEILQA…SLIEFIEDSL (62 aa)) is the HTH tetR-type domain. The segment at residues 33 to 52 (TTAKLAANVGVSEAALYRHF) is a DNA-binding region (H-T-H motif). Positions 119–144 (DRLQGRINQLFERIEMQLRQVLREKK) form a coiled coil.

It belongs to the nucleoid occlusion factor SlmA family. Homodimer. Interacts with FtsZ.

It is found in the cytoplasm. It localises to the nucleoid. Functionally, required for nucleoid occlusion (NO) phenomenon, which prevents Z-ring formation and cell division over the nucleoid. Acts as a DNA-associated cell division inhibitor that binds simultaneously chromosomal DNA and FtsZ, and disrupts the assembly of FtsZ polymers. SlmA-DNA-binding sequences (SBS) are dispersed on non-Ter regions of the chromosome, preventing FtsZ polymerization at these regions. The sequence is that of Nucleoid occlusion factor SlmA from Yersinia pseudotuberculosis serotype I (strain IP32953).